The sequence spans 242 residues: Polycomb group RING finger protein 3 (242 aa).

Residues 17–56 form an RING-type zinc finger; sequence CRLCNGYLIDATTVTECLHTFCRSCLVKYLEENNTCPTCR. Positions 120–149 are disordered; it reads EAHRNGETKTDEHTHKEPPEEKQEEDHDYH.

Component of a PRC1-like complex.

It is found in the nucleus. Functionally, component of a Polycomb group (PcG) multiprotein PRC1-like complex, a complex class required to maintain the transcriptionally repressive state of many genes, including Hox genes, throughout development. PcG PRC1 complex acts via chromatin remodeling and modification of histones; it mediates monoubiquitination of histone H2A 'Lys-119', rendering chromatin heritably changed in its expressibility. Within the PRC1-like complex, regulates RNF2 ubiquitin ligase activity. The chain is Polycomb group RING finger protein 3 (pcgf3) from Xenopus tropicalis (Western clawed frog).